Here is a 218-residue protein sequence, read N- to C-terminus: Urease accessory protein UreG (218 aa).

22-29 (GPVGSGKT) contacts GTP.

This sequence belongs to the SIMIBI class G3E GTPase family. UreG subfamily. As to quaternary structure, homodimer. UreD, UreF and UreG form a complex that acts as a GTP-hydrolysis-dependent molecular chaperone, activating the urease apoprotein by helping to assemble the nickel containing metallocenter of UreC. The UreE protein probably delivers the nickel.

It localises to the cytoplasm. Facilitates the functional incorporation of the urease nickel metallocenter. This process requires GTP hydrolysis, probably effectuated by UreG. The polypeptide is Urease accessory protein UreG (Polaromonas sp. (strain JS666 / ATCC BAA-500)).